We begin with the raw amino-acid sequence, 333 residues long: Plasminogen (333 aa).

Residues 4–83 (CMFGNGKGYR…LFDYCDVPQC (80 aa)) form the Kringle 5 domain. Cystine bridges form between Cys4–Cys83, Cys25–Cys66, Cys54–Cys78, Cys90–Cys208, Cys100–Cys108, Cys130–Cys146, Cys222–Cys289, Cys252–Cys268, and Cys279–Cys307. Residues 104–331 (VVGGCVANPH…FVTWIEGIMR (228 aa)) form the Peptidase S1 domain. Phosphoserine is present on Ser120. Catalysis depends on charge relay system residues His145 and Asp188. Ser283 (charge relay system) is an active-site residue.

The protein belongs to the peptidase S1 family. Plasminogen subfamily. In terms of assembly, interacts with CSPG4 and AMOT. Interacts (via the Kringle domains) with HRG; the interaction tethers PLG to the cell surface and enhances its activation. Interacts (via Kringle 4 domain) with ADA; the interaction stimulates PLG activation when in complex with DPP4. Angiostatin: Interacts with ATP5F1A; the interaction inhibits most of the angiogenic effects of angiostatin.

The protein resides in the secreted. The catalysed reaction is Preferential cleavage: Lys-|-Xaa &gt; Arg-|-Xaa, higher selectivity than trypsin. Converts fibrin into soluble products.. With respect to regulation, converted into plasmin by plasminogen activators, both plasminogen and its activator being bound to fibrin. Activated with urokinase and high concentrations of streptokinase. Its function is as follows. Plasmin dissolves the fibrin of blood clots and acts as a proteolytic factor in a variety of other processes including embryonic development, tissue remodeling, tumor invasion, and inflammation. In ovulation, weakens the walls of the Graafian follicle. It activates the urokinase-type plasminogen activator, collagenases and several complement zymogens, such as C1, C4 and C5. Cleavage of fibronectin and laminin leads to cell detachment and apoptosis. Also cleaves fibrin, thrombospondin and von Willebrand factor. Its role in tissue remodeling and tumor invasion may be modulated by CSPG4. Binds to cells. This Canis lupus familiaris (Dog) protein is Plasminogen (PLG).